The chain runs to 484 residues: Adenylosuccinate lyase (484 aa).

Ala-2 carries the N-acetylalanine modification. Substrate contacts are provided by residues 20 to 21 (RY), 85 to 87 (RHD), and 111 to 112 (TS). N6-acetyllysine is present on Lys-147. His-159 functions as the Proton donor/acceptor in the catalytic mechanism. Gln-241 is a binding site for substrate. The active-site Proton donor/acceptor is the Ser-289. Residue Lys-295 is modified to N6-acetyllysine. Substrate-binding residues include Arg-303, Arg-329, Ser-334, and Arg-338. Residue Lys-415 forms a Glycyl lysine isopeptide (Lys-Gly) (interchain with G-Cter in SUMO1) linkage.

This sequence belongs to the lyase 1 family. Adenylosuccinate lyase subfamily. In terms of assembly, homotetramer. Residues from neighboring subunits contribute catalytic and substrate-binding residues to each active site.

The enzyme catalyses N(6)-(1,2-dicarboxyethyl)-AMP = fumarate + AMP. It carries out the reaction (2S)-2-[5-amino-1-(5-phospho-beta-D-ribosyl)imidazole-4-carboxamido]succinate = 5-amino-1-(5-phospho-beta-D-ribosyl)imidazole-4-carboxamide + fumarate. It functions in the pathway purine metabolism; AMP biosynthesis via de novo pathway; AMP from IMP: step 2/2. Its pathway is purine metabolism; IMP biosynthesis via de novo pathway; 5-amino-1-(5-phospho-D-ribosyl)imidazole-4-carboxamide from 5-amino-1-(5-phospho-D-ribosyl)imidazole-4-carboxylate: step 2/2. Catalyzes two non-sequential steps in de novo AMP synthesis: converts (S)-2-(5-amino-1-(5-phospho-D-ribosyl)imidazole-4-carboxamido)succinate (SAICAR) to fumarate plus 5-amino-1-(5-phospho-D-ribosyl)imidazole-4-carboxamide, and thereby also contributes to de novo IMP synthesis, and converts succinyladenosine monophosphate (SAMP) to AMP and fumarate. The sequence is that of Adenylosuccinate lyase (ADSL) from Macaca fascicularis (Crab-eating macaque).